A 378-amino-acid polypeptide reads, in one-letter code: Carbamoyl phosphate synthase small chain (378 aa).

The segment at 1–189 (MTKPAILALA…DSHPTIDAAD (189 aa)) is CPSase. Residues serine 47, glycine 241, and glycine 243 each coordinate L-glutamine. The 186-residue stretch at 193 to 378 (HVVAFDYGVK…RFTDAMAKRR (186 aa)) folds into the Glutamine amidotransferase type-1 domain. Residue cysteine 269 is the Nucleophile of the active site. L-glutamine contacts are provided by leucine 270, glutamine 273, asparagine 311, glycine 313, and phenylalanine 314. Residues histidine 353 and glutamate 355 contribute to the active site.

It belongs to the CarA family. As to quaternary structure, composed of two chains; the small (or glutamine) chain promotes the hydrolysis of glutamine to ammonia, which is used by the large (or ammonia) chain to synthesize carbamoyl phosphate. Tetramer of heterodimers (alpha,beta)4.

It catalyses the reaction hydrogencarbonate + L-glutamine + 2 ATP + H2O = carbamoyl phosphate + L-glutamate + 2 ADP + phosphate + 2 H(+). The catalysed reaction is L-glutamine + H2O = L-glutamate + NH4(+). Its pathway is amino-acid biosynthesis; L-arginine biosynthesis; carbamoyl phosphate from bicarbonate: step 1/1. It functions in the pathway pyrimidine metabolism; UMP biosynthesis via de novo pathway; (S)-dihydroorotate from bicarbonate: step 1/3. Small subunit of the glutamine-dependent carbamoyl phosphate synthetase (CPSase). CPSase catalyzes the formation of carbamoyl phosphate from the ammonia moiety of glutamine, carbonate, and phosphate donated by ATP, constituting the first step of 2 biosynthetic pathways, one leading to arginine and/or urea and the other to pyrimidine nucleotides. The small subunit (glutamine amidotransferase) binds and cleaves glutamine to supply the large subunit with the substrate ammonia. This is Carbamoyl phosphate synthase small chain from Pseudomonas putida (strain ATCC 47054 / DSM 6125 / CFBP 8728 / NCIMB 11950 / KT2440).